The sequence spans 387 residues: 3-ketoacyl-CoA thiolase (387 aa).

The active-site Acyl-thioester intermediate is the Cys91. Catalysis depends on proton acceptor residues His343 and Cys373.

Belongs to the thiolase-like superfamily. Thiolase family. In terms of assembly, heterotetramer of two alpha chains (FadB) and two beta chains (FadA).

It localises to the cytoplasm. The enzyme catalyses an acyl-CoA + acetyl-CoA = a 3-oxoacyl-CoA + CoA. It functions in the pathway lipid metabolism; fatty acid beta-oxidation. In terms of biological role, catalyzes the final step of fatty acid oxidation in which acetyl-CoA is released and the CoA ester of a fatty acid two carbons shorter is formed. The chain is 3-ketoacyl-CoA thiolase from Erwinia tasmaniensis (strain DSM 17950 / CFBP 7177 / CIP 109463 / NCPPB 4357 / Et1/99).